The chain runs to 197 residues: UPF0319 protein VP0761 (197 aa).

A signal peptide spans 1–20; the sequence is MKKTTTLLGICAILSAPAFA.

This sequence belongs to the UPF0319 family.

This is UPF0319 protein VP0761 from Vibrio parahaemolyticus serotype O3:K6 (strain RIMD 2210633).